The following is a 209-amino-acid chain: Outer-membrane lipoprotein carrier protein (209 aa).

The signal sequence occupies residues 1-23 (MKNLLKKSLLGLAFLSLNGFAFA).

Belongs to the LolA family. In terms of assembly, monomer.

It is found in the periplasm. In terms of biological role, participates in the translocation of lipoproteins from the inner membrane to the outer membrane. Only forms a complex with a lipoprotein if the residue after the N-terminal Cys is not an aspartate (The Asp acts as a targeting signal to indicate that the lipoprotein should stay in the inner membrane). The protein is Outer-membrane lipoprotein carrier protein of Glaesserella parasuis serovar 5 (strain SH0165) (Haemophilus parasuis).